The primary structure comprises 345 residues: Centromere protein U (345 aa).

Basic residues-rich tracts occupy residues 1–10 and 19–29; these read MSSKKRTKRN and HKGRSHPRRKF. Disordered stretches follow at residues 1–37 and 64–153; these read MSSKKRTKRNRAGDEYKEHKGRSHPRRKFLPPEEPDV and AVDA…SSVQ. The segment covering 88-106 has biased composition (basic and acidic residues); the sequence is NAERSEKMLLETPEGDVHE. The segment covering 142–152 has biased composition (low complexity); it reads SDSSVNSPSSV. Positions 201–294 form a coiled coil; it reads CSAFEDQVTD…QDYLDYREEN (94 aa). The Nuclear localization signal signature appears at 222 to 239; that stretch reads KKKNAKVVADIKKKRQRL.

This sequence belongs to the CENP-U/AME1 family. Interacts with CENPH-CENPI complex at the kinetochore.

It localises to the nucleus. It is found in the chromosome. The protein resides in the centromere. In terms of biological role, probable component of a centromeric complex involved in assembly of kinetochore proteins, mitotic progression and chromosome segregation. Required for maintenance of sister chromatid adhesion during mitotic checkpoint activation. The chain is Centromere protein U (CENPU) from Gallus gallus (Chicken).